The primary structure comprises 410 residues: Beta-arrestin-2 (410 aa).

Tyr-48 carries the phosphotyrosine modification. Hydroxyproline; by PHD2 occurs at positions 176 and 181. Residues 241-410 form an interaction with TRAF6 region; it reads ADICLFSTAQ…KDDDCDDQFC (170 aa). Position 361 is a phosphoserine (Ser-361). An interaction with AP2B1 region spans residues 378–410; sequence DTNYATDDDIVFEDFARLRLKGMKDDDCDDQFC. Thr-383 carries the phosphothreonine; by CaMK2 modification. Residues 386 to 396 carry the [DE]-X(1,2)-F-X-X-[FL]-X-X-X-R motif motif; it reads DIVFEDFARLR.

The protein belongs to the arrestin family. Homooligomer; the self-association is mediated by InsP6-binding. Heterooligomer with ARRB1; the association is mediated by InsP6-binding. Interacts with ADRB2 and CHRM2. Interacts with PDE4A. Interacts with PDE4D. Interacts with MAPK10, MAPK1 and MAPK3. Interacts with DRD2. Interacts with FSHR. Interacts with CLTC. Interacts with HTR2C. Interacts with CCR5. Interacts with CXCR4. Interacts with SRC. Interacts with DUSP16; the interaction is interrupted by stimulation of AGTR1 and activation of MAPK10. Interacts with CHUK; the interaction is enhanced stimulation of ADRB2. Interacts with RELA. Interacts with MDM2; the interaction is enhanced by activation of GPCRs. Interacts with SLC9A5. Interacts with TRAF6. Interacts with IGF1R. Interacts with ENG. Interacts with KIR2DL1, KIR2DL3 and KIR2DL4. Interacts with LDLR. Interacts with AP2B1. Interacts with C5AR1. Interacts with RAF1. Interacts with MAP2K1. Interacts with MAPK1. Interacts with MAPK10; the interaction enhances MAPK10 activation by MAP3K5. Interacts with MAP2K4; the interaction is enhanced by presence of MAP3K5 and MAPK10. Interacts with MAP3K5. Interacts with AKT1. Interacts with IKBKB and MAP3K14. Interacts with SMO (activated). Interacts with GSK3A and GSK3B. Associates with protein phosphatase 2A (PP2A). Interacts with CXCR4; the interaction is dependent on C-terminal phosphorylation of CXCR4 and allows activation of MAPK1 and MAPK3. Interacts with GPR143. Interacts with HCK and CXCR1 (phosphorylated). Interacts with ACKR3 and ACKR4. Interacts with ARRDC1; the interaction is direct. Interacts with GPR61, GPR62 and GPR135. Interacts (via NACHT and LRR domains) with NLRP3; this interaction is direct and inducible by omega-3 polyunsaturated fatty acids (PUFAs). Interacts with FFAR4 (via C-terminus); this interaction is stimulated by long-chain fatty acids (LCFAs). Interacts with GPR35. Interacts with GPR84. Interacts with TIGIT; this interaction inhibits the NF-kappa-B pathway. Interacts with TGFBR3. In terms of processing, phosphorylated at Thr-383 in the cytoplasm; probably dephosphorylated at the plasma membrane. The phosphorylation does not regulate internalization and recycling of ADRB2, interaction with clathrin or AP2B1. The ubiquitination status appears to regulate the formation and trafficking of beta-arrestin-GPCR complexes and signaling. Ubiquitination appears to occur GPCR-specific. Ubiquitinated by MDM2; the ubiquitination is required for rapid internalization of ADRB2. Deubiquitinated by USP33; the deubiquitination leads to a dissociation of the beta-arrestin-GPCR complex. Stimulation of a class A GPCR, such as ADRB2, induces transient ubiquitination and subsequently promotes association with USP33. Stimulation of a class B GPCR promotes a sustained ubiquitination. Deubiquitinated by USP20; allowing USP20 to deubiquitinate TRAF6 leading to inhibition of NF-kappa-B signaling. Post-translationally, hydroxylation by PHD2 modulates the rate of internalization by slowing down recruitment to the plasma membrane and inhibiting subsequent co-internalization with class A receptors. As to expression, predominantly localized in neuronal tissues and in the spleen.

The protein resides in the cytoplasm. It localises to the nucleus. Its subcellular location is the cell membrane. It is found in the membrane. The protein localises to the clathrin-coated pit. The protein resides in the cytoplasmic vesicle. Its function is as follows. Functions in regulating agonist-mediated G-protein coupled receptor (GPCR) signaling by mediating both receptor desensitization and resensitization processes. During homologous desensitization, beta-arrestins bind to the GPRK-phosphorylated receptor and sterically preclude its coupling to the cognate G-protein; the binding appears to require additional receptor determinants exposed only in the active receptor conformation. The beta-arrestins target many receptors for internalization by acting as endocytic adapters (CLASPs, clathrin-associated sorting proteins) and recruiting the GPRCs to the adapter protein 2 complex 2 (AP-2) in clathrin-coated pits (CCPs). However, the extent of beta-arrestin involvement appears to vary significantly depending on the receptor, agonist and cell type. Internalized arrestin-receptor complexes traffic to intracellular endosomes, where they remain uncoupled from G-proteins. Two different modes of arrestin-mediated internalization occur. Class A receptors, like ADRB2, OPRM1, ENDRA, D1AR and ADRA1B dissociate from beta-arrestin at or near the plasma membrane and undergo rapid recycling. Class B receptors, like AVPR2, AGTR1, NTSR1, TRHR and TACR1 internalize as a complex with arrestin and traffic with it to endosomal vesicles, presumably as desensitized receptors, for extended periods of time. Receptor resensitization then requires that receptor-bound arrestin is removed so that the receptor can be dephosphorylated and returned to the plasma membrane. Mediates endocytosis of CCR7 following ligation of CCL19 but not CCL21. Involved in internalization of P2RY1, P2RY4, P2RY6 and P2RY11 and ATP-stimulated internalization of P2RY2. Involved in phosphorylation-dependent internalization of OPRD1 and subsequent recycling or degradation. Involved in ubiquitination of IGF1R. Beta-arrestins function as multivalent adapter proteins that can switch the GPCR from a G-protein signaling mode that transmits short-lived signals from the plasma membrane via small molecule second messengers and ion channels to a beta-arrestin signaling mode that transmits a distinct set of signals that are initiated as the receptor internalizes and transits the intracellular compartment. Acts as a signaling scaffold for MAPK pathways such as MAPK1/3 (ERK1/2) and MAPK10 (JNK3). ERK1/2 and JNK3 activated by the beta-arrestin scaffold are largely excluded from the nucleus and confined to cytoplasmic locations such as endocytic vesicles, also called beta-arrestin signalosomes. Acts as a signaling scaffold for the AKT1 pathway. GPCRs for which the beta-arrestin-mediated signaling relies on both ARRB1 and ARRB2 (codependent regulation) include ADRB2, F2RL1 and PTH1R. For some GPCRs the beta-arrestin-mediated signaling relies on either ARRB1 or ARRB2 and is inhibited by the other respective beta-arrestin form (reciprocal regulation). Increases ERK1/2 signaling in AGTR1- and AVPR2-mediated activation (reciprocal regulation). Involved in CCR7-mediated ERK1/2 signaling involving ligand CCL19. Is involved in type-1A angiotensin II receptor/AGTR1-mediated ERK activity. Is involved in type-1A angiotensin II receptor/AGTR1-mediated MAPK10 activity. Is involved in dopamine-stimulated AKT1 activity in the striatum by disrupting the association of AKT1 with its negative regulator PP2A. Involved in AGTR1-mediated chemotaxis. Appears to function as signaling scaffold involved in regulation of MIP-1-beta-stimulated CCR5-dependent chemotaxis. Involved in attenuation of NF-kappa-B-dependent transcription in response to GPCR or cytokine stimulation by interacting with and stabilizing CHUK. Suppresses UV-induced NF-kappa-B-dependent activation by interacting with CHUK. The function is promoted by stimulation of ADRB2 and dephosphorylation of ARRB2. Involved in IL8-mediated granule release in neutrophils. Involved in p53/TP53-mediated apoptosis by regulating MDM2 and reducing the MDM2-mediated degradation of p53/TP53. May serve as nuclear messenger for GPCRs. Upon stimulation of OR1D2, may be involved in regulation of gene expression during the early processes of fertilization. Also involved in regulation of receptors other than GPCRs. Involved in endocytosis of TGFBR2 and TGFBR3 and down-regulates TGF-beta signaling such as NF-kappa-B activation. Involved in endocytosis of low-density lipoprotein receptor/LDLR. Involved in endocytosis of smoothened homolog/Smo, which also requires GRK2. Involved in endocytosis of SLC9A5. Involved in endocytosis of ENG and subsequent TGF-beta-mediated ERK activation and migration of epithelial cells. Involved in Toll-like receptor and IL-1 receptor signaling through the interaction with TRAF6 which prevents TRAF6 autoubiquitination and oligomerization required for activation of NF-kappa-B and JUN. Involved in insulin resistance by acting as insulin-induced signaling scaffold for SRC, AKT1 and INSR. Involved in regulation of inhibitory signaling of natural killer cells by recruiting PTPN6 and PTPN11 to KIR2DL1. Involved in the internalization of the atypical chemokine receptor ACKR3. Acts as an adapter protein coupling FFAR4 receptor to specific downstream signaling pathways, as well as mediating receptor endocytosis. During the activation step of NLRP3 inflammasome, directly associates with NLRP3 leading to inhibition of pro-inflammatory cytokine release and inhibition of inflammation. The protein is Beta-arrestin-2 (Arrb2) of Rattus norvegicus (Rat).